Consider the following 255-residue polypeptide: Triosephosphate isomerase (255 aa).

Residue 9 to 11 (NWK) coordinates substrate. His-95 functions as the Electrophile in the catalytic mechanism. The active-site Proton acceptor is the Glu-167. Substrate is bound by residues Gly-173, Ser-212, and 233-234 (GG).

The protein belongs to the triosephosphate isomerase family. In terms of assembly, homodimer.

Its subcellular location is the cytoplasm. The enzyme catalyses D-glyceraldehyde 3-phosphate = dihydroxyacetone phosphate. Its pathway is carbohydrate biosynthesis; gluconeogenesis. It functions in the pathway carbohydrate degradation; glycolysis; D-glyceraldehyde 3-phosphate from glycerone phosphate: step 1/1. Functionally, involved in the gluconeogenesis. Catalyzes stereospecifically the conversion of dihydroxyacetone phosphate (DHAP) to D-glyceraldehyde-3-phosphate (G3P). This is Triosephosphate isomerase from Enterobacter cloacae.